We begin with the raw amino-acid sequence, 251 residues long: Small ribosomal subunit protein uS2 (251 aa).

Serine 2 is subject to N-acetylserine. Residues 213–251 (QVAEEATAAADEDVKEEVAEEQTEAADWAEGNTEEVASW) form a disordered region. The span at 222–236 (ADEDVKEEVAEEQTE) shows a compositional bias: acidic residues.

This sequence belongs to the universal ribosomal protein uS2 family. Component of the small ribosomal subunit. Mature ribosomes consist of a small (40S) and a large (60S) subunit. The 40S subunit contains about 33 different proteins and 1 molecule of RNA (18S). The 60S subunit contains about 49 different proteins and 3 molecules of RNA (25S, 5.8S and 5S). Interacts with RPS21.

It localises to the cytoplasm. Required for the assembly and/or stability of the 40S ribosomal subunit. Required for the processing of the 20S rRNA-precursor to mature 18S rRNA in a late step of the maturation of 40S ribosomal subunits. The protein is Small ribosomal subunit protein uS2 of Lachancea thermotolerans (strain ATCC 56472 / CBS 6340 / NRRL Y-8284) (Yeast).